The sequence spans 465 residues: Plasma alpha-L-fucosidase (465 aa).

Positions 1–26 (MRPQELPRLAFPLLLLLLLPPPPCPA) are cleaved as a signal peptide. Residues Asn169 and Asn237 are each glycosylated (N-linked (GlcNAc...) asparagine). Position 299 is a phosphoserine (Ser299). Asn375 carries an N-linked (GlcNAc...) asparagine glycan.

Belongs to the glycosyl hydrolase 29 family. Homotetramer.

It is found in the secreted. The catalysed reaction is an alpha-L-fucoside + H2O = L-fucose + an alcohol. Alpha-L-fucosidase is responsible for hydrolyzing the alpha-1,6-linked fucose joined to the reducing-end N-acetylglucosamine of the carbohydrate moieties of glycoproteins. In Pongo abelii (Sumatran orangutan), this protein is Plasma alpha-L-fucosidase (FUCA2).